We begin with the raw amino-acid sequence, 782 residues long: MEIESGSYQNAKKESWRTVLTLAYQSLGVVYGDLSISPLYVYKSTFAEDIHHSESNEEIFGVLSFIFWTITLVPLLKYVFIVLRADDNGEGGTFALYSLLCRHARVNSLPSCQLADEQLIEYKTDSIGSSSMPQSGFAASLKSTLEKHGVLQKILLVLALIGTCMVIGDGVLTPAISVFSAVSGVELSMSKEHHKYIELPAACVILIGLFALQHYGTHRVGFLFAPVILLWLMCISAIGVYNIFHWNPHVYQALSPYYMYKFLKKTQSRGWMSLGGILLCITGSEAMFADLGHFSQLSIKIAFTSLVYPSLILAYMGQAAYLSQHHIIESEYNIGFYVSVPERLRWPVLVIAILAAVVGSQAIITGTFSIIKQCSALGCFPKVKIVHTSSKIHGQIYIPEINWILMVLCLAVTIGFRDTKRLGNASGLAVITVMLVTTCLMSLVIVLCWHKSVIFAIVFVVFFGTIESLYFSASLIKFLEGAWVPIALAFCFLLAMCTWHYGTLKRYEYDVQNKVSVNWLLSLSQTLGIARVRGLGLIHTELVSGVPAIFSHFVTNLPAFHQVLVFLCVKSVPVPHVRPQERFLVGRIGPKEFRIYRCIVRFGYRDVHKDDFEFEGDLVCSIAEFIRTEAETAATAAETNGEDDDRMSVVGTCSTYMQGIEDHYESDIDDPDKPGTSEIRSPKPKKKSKSKVKKRVRFVVPETPKIEKETRQELMELTEAREGGVAYIMGNAYMKAKPGSGLLKRLAINIGYEFLRRNTRGPRNMLTSPHASTLEVGMIYNV.

Topologically, residues 1–18 are cytoplasmic; that stretch reads MEIESGSYQNAKKESWRT. The chain crosses the membrane as a helical span at residues 19–39; sequence VLTLAYQSLGVVYGDLSISPL. Over 40 to 61 the chain is Extracellular; that stretch reads YVYKSTFAEDIHHSESNEEIFG. A helical transmembrane segment spans residues 62–82; sequence VLSFIFWTITLVPLLKYVFIV. Over 83 to 153 the chain is Cytoplasmic; the sequence is LRADDNGEGG…TLEKHGVLQK (71 aa). The helical transmembrane segment at 154–174 threads the bilayer; that stretch reads ILLVLALIGTCMVIGDGVLTP. At 175 to 195 the chain is on the extracellular side; that stretch reads AISVFSAVSGVELSMSKEHHK. Residues 196 to 216 form a helical membrane-spanning segment; that stretch reads YIELPAACVILIGLFALQHYG. Over 217–219 the chain is Cytoplasmic; sequence THR. The chain crosses the membrane as a helical span at residues 220-240; sequence VGFLFAPVILLWLMCISAIGV. Over 241-270 the chain is Extracellular; it reads YNIFHWNPHVYQALSPYYMYKFLKKTQSRG. Residues 271–291 traverse the membrane as a helical segment; it reads WMSLGGILLCITGSEAMFADL. Residues 292–296 are Cytoplasmic-facing; sequence GHFSQ. The chain crosses the membrane as a helical span at residues 297–317; sequence LSIKIAFTSLVYPSLILAYMG. Residues 318-347 are Extracellular-facing; that stretch reads QAAYLSQHHIIESEYNIGFYVSVPERLRWP. A helical membrane pass occupies residues 348–368; sequence VLVIAILAAVVGSQAIITGTF. Residues 369–395 are Cytoplasmic-facing; sequence SIIKQCSALGCFPKVKIVHTSSKIHGQ. The helical transmembrane segment at 396-416 threads the bilayer; that stretch reads IYIPEINWILMVLCLAVTIGF. The Extracellular segment spans residues 417–421; the sequence is RDTKR. 2 helical membrane-spanning segments follow: residues 422–442 and 443–463; these read LGNASGLAVITVMLVTTCLMS and LVIVLCWHKSVIFAIVFVVFF. The Extracellular portion of the chain corresponds to 464 to 474; the sequence is GTIESLYFSAS. A helical transmembrane segment spans residues 475 to 495; the sequence is LIKFLEGAWVPIALAFCFLLA. The Cytoplasmic portion of the chain corresponds to 496-782; sequence MCTWHYGTLK…TLEVGMIYNV (287 aa). Basic and acidic residues predominate over residues 664–675; it reads YESDIDDPDKPG. The disordered stretch occupies residues 664-693; the sequence is YESDIDDPDKPGTSEIRSPKPKKKSKSKVK. Basic residues predominate over residues 682–693; that stretch reads PKPKKKSKSKVK.

The protein belongs to the HAK/KUP transporter (TC 2.A.72.3) family.

The protein resides in the cell membrane. Probable potassium transporter. This is Potassium transporter 6 (POT6) from Arabidopsis thaliana (Mouse-ear cress).